A 387-amino-acid chain; its full sequence is MDGRNEKPTTPVSDFRVGSSEQSQAGVNLEDSSDHRTSNSAESKKGNLSGKSISDLGISNNDNKNVRFTADTDALENDLSSRSTETSDNSKGTDGQDEEDRPARHKRKPKVSFTHLRNNGKDGDDETFIKKIINNLTGNQGGLVPGLAPIPSENENGKNDIEKNNRNEEIPLSDLADASKIVDVHEGDDKEKLEALKLEGDVNCTSDGETLGSSSKNSFLAPAVDHFDDYAENNSSDDNEGFIETSTYVPPPSQVKSGVLGSLLKLYQNEDQNSSSIFSDSQAVTTDDEGISSTAGNKDVPVAKRSRLQNLKGKAKKGRMPRLKKRLKTEAKITVHIADILQRHRFILRMCRALMMYGAPTHRLEEYMVMTSRVLEIDGQFCIFQVV.

Disordered stretches follow at residues 1–126, 138–169, and 275–298; these read MDGR…GDDE, GNQG…RNEE, and SSIF…AGNK. Residues 32–45 show a composition bias toward basic and acidic residues; that stretch reads SSDHRTSNSAESKK. 2 stretches are compositionally biased toward polar residues: residues 49–63 and 78–93; these read SGKS…NNDN and DLSS…SKGT. Residues 155–169 are compositionally biased toward basic and acidic residues; sequence ENGKNDIEKNNRNEE. Positions 275 to 296 are enriched in polar residues; it reads SSIFSDSQAVTTDDEGISSTAG.

This sequence belongs to the ThrE exporter (TC 2.A.79) family.

This is an uncharacterized protein from Saccharomyces cerevisiae (strain ATCC 204508 / S288c) (Baker's yeast).